We begin with the raw amino-acid sequence, 433 residues long: Protein FAM98B (433 aa).

The disordered stretch occupies residues 303–433 (GRVPDRGGRP…GGGGGGYRRY (131 aa)). Residues 305-314 (VPDRGGRPNE) show a composition bias toward basic and acidic residues. The span at 331 to 433 (GGGGRGGWGG…GGGGGGYRRY (103 aa)) shows a compositional bias: gly residues.

This sequence belongs to the FAM98 family. In terms of assembly, homodimer. Component of the tRNA-splicing ligase complex. Interacts with FAM98A. Expressed strongly in colorectal cancer tissues compared to wild-type colon samples (at protein level). Expressed strongly in colorectal cancer tissues compared to wild-type colon samples.

Its subcellular location is the nucleus. It localises to the cytoplasm. Functionally, positively stimulates PRMT1-induced protein arginine dimethylated arginine methylation. The protein is Protein FAM98B (FAM98B) of Homo sapiens (Human).